A 353-amino-acid polypeptide reads, in one-letter code: Photosystem II D2 protein (353 aa).

Position 2 is an N-acetylthreonine (Thr2). Position 2 is a phosphothreonine (Thr2). Residues 41–61 form a helical membrane-spanning segment; that stretch reads CAYFAVGGWFTGTTFVTSWYT. His118 provides a ligand contact to chlorophyll a. Residues 125-141 form a helical membrane-spanning segment; sequence GFMLRQFELARSVQLRP. Pheophytin a-binding residues include Gln130 and Asn143. A helical membrane pass occupies residues 153-166; that stretch reads VFVSVFLIYPLGQS. His198 contacts chlorophyll a. A helical transmembrane segment spans residues 208–228; the sequence is AALLCAIHGATVENTLFEDGD. Residues His215 and Phe262 each coordinate a plastoquinone. Position 215 (His215) interacts with Fe cation. His269 serves as a coordination point for Fe cation. A helical transmembrane segment spans residues 279–295; sequence GLWMSALGVVGLALNLR.

It belongs to the reaction center PufL/M/PsbA/D family. PSII is composed of 1 copy each of membrane proteins PsbA, PsbB, PsbC, PsbD, PsbE, PsbF, PsbH, PsbI, PsbJ, PsbK, PsbL, PsbM, PsbT, PsbX, PsbY, PsbZ, Psb30/Ycf12, at least 3 peripheral proteins of the oxygen-evolving complex and a large number of cofactors. It forms dimeric complexes. The D1/D2 heterodimer binds P680, chlorophylls that are the primary electron donor of PSII, and subsequent electron acceptors. It shares a non-heme iron and each subunit binds pheophytin, quinone, additional chlorophylls, carotenoids and lipids. There is also a Cl(-1) ion associated with D1 and D2, which is required for oxygen evolution. The PSII complex binds additional chlorophylls, carotenoids and specific lipids. is required as a cofactor.

Its subcellular location is the plastid. It localises to the chloroplast thylakoid membrane. It catalyses the reaction 2 a plastoquinone + 4 hnu + 2 H2O = 2 a plastoquinol + O2. Its function is as follows. Photosystem II (PSII) is a light-driven water:plastoquinone oxidoreductase that uses light energy to abstract electrons from H(2)O, generating O(2) and a proton gradient subsequently used for ATP formation. It consists of a core antenna complex that captures photons, and an electron transfer chain that converts photonic excitation into a charge separation. The D1/D2 (PsbA/PsbD) reaction center heterodimer binds P680, the primary electron donor of PSII as well as several subsequent electron acceptors. D2 is needed for assembly of a stable PSII complex. The polypeptide is Photosystem II D2 protein (Cicer arietinum (Chickpea)).